The primary structure comprises 209 residues: Ras-like GTP-binding protein RYL2 (209 aa).

12-19 (GAQGVGKT) serves as a coordination point for GTP. The Effector region signature appears at 34–42 (QASTIGASF). GTP is bound by residues 60-64 (DTAGQ) and 118-121 (TKVD). 2 S-geranylgeranyl cysteine lipidation sites follow: Cys-208 and Cys-209.

Belongs to the small GTPase superfamily. Rab family.

It is found in the cell membrane. Its function is as follows. Protein transport. Probably involved in vesicular traffic. The chain is Ras-like GTP-binding protein RYL2 (RYL2) from Yarrowia lipolytica (strain CLIB 122 / E 150) (Yeast).